The primary structure comprises 275 residues: Maltoporin (275 aa).

It belongs to the porin LamB (TC 1.B.3) family. Homotrimer formed of three 18-stranded antiparallel beta-barrels, containing three independent channels.

It is found in the cell outer membrane. It carries out the reaction beta-maltose(in) = beta-maltose(out). Functionally, involved in the transport of maltose and maltodextrins. In Vibrio parahaemolyticus, this protein is Maltoporin (lamB).